Here is a 536-residue protein sequence, read N- to C-terminus: CTP synthase (536 aa).

Residues 1–268 are amidoligase domain; sequence MSTKYVFVTG…DNLVCEKLHL (268 aa). Position 14 (serine 14) interacts with CTP. Serine 14 lines the UTP pocket. 15–20 serves as a coordination point for ATP; the sequence is ALGKGI. Tyrosine 55 provides a ligand contact to L-glutamine. Aspartate 72 contributes to the ATP binding site. Aspartate 72 and glutamate 142 together coordinate Mg(2+). CTP contacts are provided by residues 149 to 151, 189 to 194, and lysine 225; these read DIE and KTKPTQ. UTP is bound by residues 189–194 and lysine 225; that span reads KTKPTQ. Positions 293 to 535 constitute a Glutamine amidotransferase type-1 domain; it reads KIALVGKYVE…IKAALEENKS (243 aa). Glycine 355 contacts L-glutamine. Cysteine 382 functions as the Nucleophile; for glutamine hydrolysis in the catalytic mechanism. L-glutamine is bound by residues 383 to 386, glutamate 406, and arginine 463; that span reads LGMQ. Residues histidine 508 and glutamate 510 contribute to the active site.

This sequence belongs to the CTP synthase family. As to quaternary structure, homotetramer.

The catalysed reaction is UTP + L-glutamine + ATP + H2O = CTP + L-glutamate + ADP + phosphate + 2 H(+). It carries out the reaction L-glutamine + H2O = L-glutamate + NH4(+). It catalyses the reaction UTP + NH4(+) + ATP = CTP + ADP + phosphate + 2 H(+). Its pathway is pyrimidine metabolism; CTP biosynthesis via de novo pathway; CTP from UDP: step 2/2. Its activity is regulated as follows. Allosterically activated by GTP, when glutamine is the substrate; GTP has no effect on the reaction when ammonia is the substrate. The allosteric effector GTP functions by stabilizing the protein conformation that binds the tetrahedral intermediate(s) formed during glutamine hydrolysis. Inhibited by the product CTP, via allosteric rather than competitive inhibition. Functionally, catalyzes the ATP-dependent amination of UTP to CTP with either L-glutamine or ammonia as the source of nitrogen. Regulates intracellular CTP levels through interactions with the four ribonucleotide triphosphates. This Clostridium beijerinckii (strain ATCC 51743 / NCIMB 8052) (Clostridium acetobutylicum) protein is CTP synthase.